Consider the following 370-residue polypeptide: S-adenosylmethionine:tRNA ribosyltransferase-isomerase (370 aa).

This sequence belongs to the QueA family. In terms of assembly, monomer.

The protein resides in the cytoplasm. The catalysed reaction is 7-aminomethyl-7-carbaguanosine(34) in tRNA + S-adenosyl-L-methionine = epoxyqueuosine(34) in tRNA + adenine + L-methionine + 2 H(+). The protein operates within tRNA modification; tRNA-queuosine biosynthesis. In terms of biological role, transfers and isomerizes the ribose moiety from AdoMet to the 7-aminomethyl group of 7-deazaguanine (preQ1-tRNA) to give epoxyqueuosine (oQ-tRNA). In Prochlorococcus marinus (strain SARG / CCMP1375 / SS120), this protein is S-adenosylmethionine:tRNA ribosyltransferase-isomerase.